We begin with the raw amino-acid sequence, 187 residues long: Orotate phosphoribosyltransferase (187 aa).

110-118 contacts 5-phospho-alpha-D-ribose 1-diphosphate; that stretch reads EDVVTTGGS. Orotate is bound by residues Thr114 and Arg142.

Belongs to the purine/pyrimidine phosphoribosyltransferase family. PyrE subfamily. Homodimer. Mg(2+) serves as cofactor.

It catalyses the reaction orotidine 5'-phosphate + diphosphate = orotate + 5-phospho-alpha-D-ribose 1-diphosphate. Its pathway is pyrimidine metabolism; UMP biosynthesis via de novo pathway; UMP from orotate: step 1/2. Its function is as follows. Catalyzes the transfer of a ribosyl phosphate group from 5-phosphoribose 1-diphosphate to orotate, leading to the formation of orotidine monophosphate (OMP). This chain is Orotate phosphoribosyltransferase, found in Thermotoga maritima (strain ATCC 43589 / DSM 3109 / JCM 10099 / NBRC 100826 / MSB8).